We begin with the raw amino-acid sequence, 251 residues long: Cell division protein ZapD (251 aa).

Belongs to the ZapD family. Interacts with FtsZ.

Its subcellular location is the cytoplasm. Cell division factor that enhances FtsZ-ring assembly. Directly interacts with FtsZ and promotes bundling of FtsZ protofilaments, with a reduction in FtsZ GTPase activity. This chain is Cell division protein ZapD, found in Paraburkholderia phytofirmans (strain DSM 17436 / LMG 22146 / PsJN) (Burkholderia phytofirmans).